A 330-amino-acid polypeptide reads, in one-letter code: MKIAIDAMGGDHAPKAVVLGAMKAIKEYSDLHITLVGKEEEIRQYLTNEERITILHTDEKIEATDEPVRAVRRKKQASMVLAAQQVKEGKADACISAGSTGALMAAGLFVVGRMEGIERPALSPTMPTVGGEGFVMLDVGANVDAKPIHLYQYALMGSVYAEKVRGIKNPRVGLLNVGTEDGKGNDLSKQVFSMLKDAPIHFVGNVESRDLLQGVADVVVCDGFTGNVALKSLEGTALALFSMLKEQLMSSFTSKLAAAVLKPKLMTLKDKMDYSEYGGAALFGLKAPVIKAHGSSNDQSIFSAIRQTREMVAKEVIPTISSVMEKEPLR.

This sequence belongs to the PlsX family. In terms of assembly, homodimer. Probably interacts with PlsY.

Its subcellular location is the cytoplasm. The enzyme catalyses a fatty acyl-[ACP] + phosphate = an acyl phosphate + holo-[ACP]. It functions in the pathway lipid metabolism; phospholipid metabolism. In terms of biological role, catalyzes the reversible formation of acyl-phosphate (acyl-PO(4)) from acyl-[acyl-carrier-protein] (acyl-ACP). This enzyme utilizes acyl-ACP as fatty acyl donor, but not acyl-CoA. The polypeptide is Phosphate acyltransferase (Bacillus cytotoxicus (strain DSM 22905 / CIP 110041 / 391-98 / NVH 391-98)).